Reading from the N-terminus, the 127-residue chain is UPF0102 protein Cpha266_0037 (127 aa).

Belongs to the UPF0102 family.

This is UPF0102 protein Cpha266_0037 from Chlorobium phaeobacteroides (strain DSM 266 / SMG 266 / 2430).